We begin with the raw amino-acid sequence, 310 residues long: Porphobilinogen deaminase (310 aa).

Cys-242 bears the S-(dipyrrolylmethanemethyl)cysteine mark.

It belongs to the HMBS family. In terms of assembly, monomer. Requires dipyrromethane as cofactor.

It catalyses the reaction 4 porphobilinogen + H2O = hydroxymethylbilane + 4 NH4(+). The protein operates within porphyrin-containing compound metabolism; protoporphyrin-IX biosynthesis; coproporphyrinogen-III from 5-aminolevulinate: step 2/4. In terms of biological role, tetrapolymerization of the monopyrrole PBG into the hydroxymethylbilane pre-uroporphyrinogen in several discrete steps. This Shewanella sp. (strain W3-18-1) protein is Porphobilinogen deaminase.